The chain runs to 233 residues: Orotidine 5'-phosphate decarboxylase (233 aa).

Residues D12, K34, 61–70 (DWKLHDIGAT), T116, R181, Q190, G210, and R211 each bind substrate. The active-site Proton donor is K63.

The protein belongs to the OMP decarboxylase family. Type 1 subfamily. In terms of assembly, homodimer.

It carries out the reaction orotidine 5'-phosphate + H(+) = UMP + CO2. It functions in the pathway pyrimidine metabolism; UMP biosynthesis via de novo pathway; UMP from orotate: step 2/2. Its function is as follows. Catalyzes the decarboxylation of orotidine 5'-monophosphate (OMP) to uridine 5'-monophosphate (UMP). The chain is Orotidine 5'-phosphate decarboxylase from Caulobacter vibrioides (strain ATCC 19089 / CIP 103742 / CB 15) (Caulobacter crescentus).